The sequence spans 44 residues: Photosystem I reaction center subunit IX (44 aa).

Residues 9 to 29 form a helical membrane-spanning segment; that stretch reads FIRSAPVVAAVWLSLTAGIII.

The protein belongs to the PsaJ family.

The protein localises to the cellular thylakoid membrane. May help in the organization of the PsaE and PsaF subunits. This Prochlorococcus marinus subsp. pastoris (strain CCMP1986 / NIES-2087 / MED4) protein is Photosystem I reaction center subunit IX.